Consider the following 338-residue polypeptide: Probable tRNA pseudouridine synthase B (338 aa).

Aspartate 80 functions as the Nucleophile in the catalytic mechanism. In terms of domain architecture, PUA spans 247-322 (LPRIEIRDTA…IMVDTKRVLM (76 aa)).

Belongs to the pseudouridine synthase TruB family. Type 2 subfamily.

The enzyme catalyses uridine(55) in tRNA = pseudouridine(55) in tRNA. Its function is as follows. Could be responsible for synthesis of pseudouridine from uracil-55 in the psi GC loop of transfer RNAs. The sequence is that of Probable tRNA pseudouridine synthase B from Methanopyrus kandleri (strain AV19 / DSM 6324 / JCM 9639 / NBRC 100938).